Reading from the N-terminus, the 243-residue chain is UPF0246 protein SAK_2020 (243 aa).

The protein belongs to the UPF0246 family.

This is UPF0246 protein SAK_2020 from Streptococcus agalactiae serotype Ia (strain ATCC 27591 / A909 / CDC SS700).